A 208-amino-acid polypeptide reads, in one-letter code: MSEPEKLTKSKDVIAYLAEQFPDCFTIKGDAKPLKIGIFEDLAKRLEDDDKVSKTRLRTALRHYTNSWRYLYSVKTGAQRVNLDGEQVEAVTEEHQQHAQETLKESKAKVAEKNKATNKAAAKKAPAKDKPENTAKAKPKTAKKPAKPKVKLADVELNKLSVGQQVQVKAGNTPMSATVLELDKDDVQVQLQNGLIMKVKADKIFLRA.

Composition is skewed to basic and acidic residues over residues 99–115 (AQET…EKNK) and 126–135 (PAKDKPENTA). A disordered region spans residues 99–149 (AQETLKESKAKVAEKNKATNKAAAKKAPAKDKPENTAKAKPKTAKKPAKPK). The span at 137 to 149 (AKPKTAKKPAKPK) shows a compositional bias: basic residues.

The protein belongs to the ProQ family.

The protein resides in the cytoplasm. Its function is as follows. RNA chaperone with significant RNA binding, RNA strand exchange and RNA duplexing activities. The chain is RNA chaperone ProQ from Idiomarina loihiensis (strain ATCC BAA-735 / DSM 15497 / L2-TR).